Reading from the N-terminus, the 132-residue chain is Large ribosomal subunit protein uL22c (132 aa).

The protein belongs to the universal ribosomal protein uL22 family. In terms of assembly, part of the 50S ribosomal subunit.

It is found in the plastid. The protein localises to the chloroplast. Its function is as follows. This protein binds specifically to 23S rRNA. The globular domain of the protein is located near the polypeptide exit tunnel on the outside of the subunit, while an extended beta-hairpin is found that lines the wall of the exit tunnel in the center of the 70S ribosome. In Staurastrum punctulatum (Green alga), this protein is Large ribosomal subunit protein uL22c (rpl22).